A 140-amino-acid polypeptide reads, in one-letter code: Large ribosomal subunit protein uL11 (140 aa).

It belongs to the universal ribosomal protein uL11 family. As to quaternary structure, part of the ribosomal stalk of the 50S ribosomal subunit. Interacts with L10 and the large rRNA to form the base of the stalk. L10 forms an elongated spine to which L12 dimers bind in a sequential fashion forming a multimeric L10(L12)X complex. Post-translationally, one or more lysine residues are methylated.

Its function is as follows. Forms part of the ribosomal stalk which helps the ribosome interact with GTP-bound translation factors. In Symbiobacterium thermophilum (strain DSM 24528 / JCM 14929 / IAM 14863 / T), this protein is Large ribosomal subunit protein uL11.